We begin with the raw amino-acid sequence, 2108 residues long: MEIKKERSFWIFCLIWSFCKGKEPVQIVQVSTVGRSECTTWGNFHFHTFDHVKFTFPGTCTYVFASHCNDSYQDFNIKIRRSDKNSHLIYFTVTTDGVILEVKETGITVNGNQIPLPFSLKSILIEDTCAYFQVTSKLGLTLKWNWADTLLLDLEETYKEKICGLCGNYDGNKKNDLILDGYKMHPRQFGNFHKVEDPSEKCPDVRPDDHTGRHPTEDDNRCSKYKKMCKKLLSRFGNCPKVVAFDDYVATCTEDMCNCVVNSSQSDLVSSCICSTLNQYSRDCVLSKGDPGEWRTKELCYQECPSNMEYMECGNSCADTCADPERSKICKAPCTDGCFCPPGTILDDLGGKKCVPRDSCPCMFQGKVYSSGGTYSTPCQNCTCKGGHWSCISLPCSGSCSIDGGFHIKTFDNKKFNFHGNCHYVLAKNTDDTFVVIGEIIQCGTSKTMTCLKNVLVTLGRTTIKICSCGSIYMNNFIVKLPVSKDGITIFRPSTFFIKILSSAGVQIRVQMKPVMQLSITVDHSYQNRTSGLCGNFNNIQTDDFRTATGAVEDSAAAFGNSWKTRASCFDVEDSFEDPCSNSVDKEKFAQHWCALLSNTSSTFAACHSVVDPSVYIKRCMYDTCNAEKSEVALCSVLSTYSRDCAAAGMTLKGWRQGICDPSEECPETMVYNYSVKYCNQSCRSLDEPDPLCKVQIAPMEGCGCPEGTYLNDEEECVTPDDCPCYYKGKIVQPGNSFQEDKLLCKCIQGRLDCIGETVLVKDCPAPMYYFNCSSAGPGAIGSECQKSCKTQDMHCYVTECVSGCMCPDGLVLDGSGGCIPKDQCPCVHGGHFYKPGETIRVDCNTCTCNKRQWNCTDNPCKGTCTVYGNGHYMSFDGEKFDFLGDCDYILAQDFCPNNMDAGTFRIVIQNNACGKSLSICSLKITLIFESSEIRLLEGRIQEIATDPGAEKNYKVDLRGGYIVIETTQGMSFMWDQKTTVVVHVTPSFQGKVCGLCGDFDGRSRNDFTTRGQSVEMSIQEFGNSWKITSTCSNINMTDLCADQPFKSALGQKHCSIIKSSVFEACHSKVNPIPYYESCVSDFCGCDSVGDCECFCTSVAAYARSCSTAGVCINWRTPAICPVFCDYYNPPDKHEWFYKPCGAPCLKTCRNPQGKCGNILYSLEGCYPECSPDKPYFDEERRECVSLPDCTSCNPEEKLCTEDSKDCLCCYNGKTYPLNETIYSQTEGTKCGNAFCGPNGMIIETFIPCSTLSVPAQEQLMQPVTSAPLLSTEATPCFCTDNGQLIQMGENVSLPMNISGHCAYSICNASCQIELIWAECKVVQTEALETCEPNSEACPPTAAPNATSLVPATALAPMSDCLGLIPPRKFNESWDFGNCQIATCLGEENNIKLSSITCPPQQLKLCVNGFPFMKHHDETGCCEVFECQCICSGWGNEHYVTFDGTYYHFKENCTYVLVELIQPSSEKFWIHIDNYYCGAADGAICSMSLLIFHSNSLVILTQAKEHGKGTNLVLFNDKKVVPDISKNGIRITSSGLYIIVEIPELEVYVSYSRLAFYIKLPFGKYYNNTMGLCGTCTNQKSDDARKRNGEVTDSFKEMALDWKAPVSTNRYCNPGISEPVKIENYQHCEPSELCKIIWNLTECHRVVPPQPYYEACVASRCSQQHPSTECQSMQTYAALCGLHGICVDWRGQTNGQCEATCARDQVYKPCGEAKRNTCFSREVIVDTLLSRNNTPVFVEGCYCPDGNILLNEHDGICVSVCGCTAQDGSVKKPREAWEHDCQYCTCDEETLNISCFPRPCAKSPPINCTKEGFVRKIKPRLDDPCCTETVCECDIKTCIINKTACDLGFQPVVAISEDGCCPIFSCIPKGVCVSEGVEFKPGAVVPKSSCEDCVCTDEQDAVTGTNRIQCVPVKCQTTCQQGFRYVEKEGQCCSQCQQVACVANFPFGSVTIEVGKSYKAPYDNCTQYTCTESGGQFSLTSTVKVCLPFEESNCVPGTVDVTSDGCCKTCIDLPHKCKRSMKEQYIVHKHCKSAAPVPVPFCEGTCSTYSVYSFENNEMEHKCICCHEKKSHVEKVELVCSEHKTLKFSYVHVDECGCVETKCPMRRT.

The first 21 residues, 1–21 (MEIKKERSFWIFCLIWSFCKG), serve as a signal peptide directing secretion. A VWFD 1 domain is found at 36-203 (SECTTWGNFH…KVEDPSEKCP (168 aa)). Intrachain disulfides connect Cys38/Cys166 and Cys60/Cys202. Residues 196–219 (EDPSEKCPDVRPDDHTGRHPTEDD) form a disordered region. The TIL 1 domain maps to 304 to 360 (CPSNMEYMECGNSCADTCADPERSKICKAPCTDGCFCPPGTILDDLGGKKCVPRDSC). N-linked (GlcNAc...) (complex) asparagine glycosylation occurs at Asn381. One can recognise a VWFD 2 domain in the interval 398 to 570 (GSCSIDGGFH…NSWKTRASCF (173 aa)). Cystine bridges form between Cys400/Cys534, Cys422/Cys569, and Cys443/Cys451. Asn528, Asn599, Asn680, and Asn772 each carry an N-linked (GlcNAc...) (complex) asparagine glycan. Residues 666-723 (CPETMVYNYSVKYCNQSCRSLDEPDPLCKVQIAPMEGCGCPEGTYLNDEEECVTPDDC) form the TIL 2 domain. Residues 782–825 (GSECQKSCKTQDMHCYVTECVSGCMCPDGLVLDGSGGCIPKDQC) enclose the TIL 3 domain. The VWFC 1 domain occupies 825-897 (CPCVHGGHFY…DYILAQDFCP (73 aa)). A glycan (N-linked (GlcNAc...) (complex) asparagine) is linked at Asn855. One can recognise a VWFD 3 domain in the interval 863–1033 (GTCTVYGNGH…NSWKITSTCS (171 aa)). Intrachain disulfides connect Cys865–Cys997, Cys887–Cys1032, Cys896–Cys994, and Cys914–Cys921. 4 N-linked (GlcNAc...) (complex) asparagine glycosylation sites follow: Asn1036, Asn1219, Asn1371, and Asn1452. Residues 1429 to 1613 (CICSGWGNEH…APVSTNRYCN (185 aa)) form the VWFD 4 domain. 3 disulfide bridges follow: Cys1431–Cys1573, Cys1453–Cys1612, and Cys1477–Cys1485. Asn1567, Asn1639, Asn1792, Asn1807, and Asn1841 each carry an N-linked (GlcNAc...) (complex) asparagine glycan. A VWFC 2 domain is found at 1761 to 1832 (CGCTAQDGSV…DPCCTETVCE (72 aa)). The 68-residue stretch at 1870 to 1937 (GVCVSEGVEF…KEGQCCSQCQ (68 aa)) folds into the VWFC 3 domain. The N-linked (GlcNAc...) (complex) asparagine glycan is linked to Asn1964. Disulfide bonds link Cys2010–Cys2066, Cys2031–Cys2080, Cys2042–Cys2096, and Cys2046–Cys2098. The CTCK domain maps to 2010–2104 (CIDLPHKCKR…ECGCVETKCP (95 aa)).

In terms of assembly, homomultimer; disulfide-linked. The N- and C-terminus mediate their assembly into higher order structures to form filaments. The CTCK domains of two polypeptides associate in the endoplasmic reticulum to generate intermolecularly disulfide-bonded dimers. These dimers progress to the Golgi apparatus, which is a more acidic environment than the endoplasmic reticulum. Under acidic conditions, the N-termini form non-covalent intermolecular interactions that juxtapose assemblies from different CTCK-linked dimers to produce long, disulfide-linked polymers that remain highly compact until secretion. N-glycosylated. Complex glycosylation with bisecting N-acetylglucosamine. Contains mainly N-acetylglucosamine (3.1-8.5%), mannose (2.9-4.6%), a small amount of galactose (1.1-4.35) and sialic acid (0.3-1.3%). Most abundant glycan is composed of a GlcNAc(2)Man(3) core, a bisecting GlcNAc and another 3 GlcNAc antannae located on the mannoses of the core. Site Asn-1639 exists both in glycosylated and non-glycosylated forms.

Its subcellular location is the secreted. Ovomucin, the glycoprotein responsible for the gel properties of egg white, is composed for 2 subunits, alpha-ovomucin/MUC5B and beta-ovomucin/MUC6. This Gallus gallus (Chicken) protein is Mucin-5B (MUC5B).